The chain runs to 466 residues: Glutamate decarboxylase (466 aa).

N6-(pyridoxal phosphate)lysine is present on lysine 277.

The protein belongs to the group II decarboxylase family. Pyridoxal 5'-phosphate is required as a cofactor.

The catalysed reaction is L-glutamate + H(+) = 4-aminobutanoate + CO2. In terms of biological role, converts internalized glutamate to GABA and increases the internal pH. Involved in glutamate-dependent acid resistance. This is Glutamate decarboxylase (gadB) from Lactococcus lactis subsp. lactis (strain IL1403) (Streptococcus lactis).